Consider the following 134-residue polypeptide: Fluoride-specific ion channel FluC (134 aa).

The next 4 membrane-spanning stretches (helical) occupy residues 7 to 27, 38 to 58, 69 to 89, and 110 to 130; these read LAVAIGGSLGAMSRYLVTIMA, GTLLVNTLGSFLAGFFLIVLV, LFLFTGFLGAFTTFSSFAAES, and VGSLSMVFIGTLVAKYVLLGH. Residues Gly-77 and Thr-80 each coordinate Na(+).

It belongs to the fluoride channel Fluc/FEX (TC 1.A.43) family.

It is found in the cell inner membrane. It catalyses the reaction fluoride(in) = fluoride(out). With respect to regulation, na(+) is not transported, but it plays an essential structural role and its presence is essential for fluoride channel function. In terms of biological role, fluoride-specific ion channel. Important for reducing fluoride concentration in the cell, thus reducing its toxicity. The chain is Fluoride-specific ion channel FluC from Legionella pneumophila subsp. pneumophila (strain Philadelphia 1 / ATCC 33152 / DSM 7513).